Reading from the N-terminus, the 168-residue chain is ATP synthase subunit b (168 aa).

Residues 7–26 (FVLSNFIFTLINLWIMYWVL) form a helical membrane-spanning segment.

This sequence belongs to the ATPase B chain family. In terms of assembly, F-type ATPases have 2 components, F(1) - the catalytic core - and F(0) - the membrane proton channel. F(1) has five subunits: alpha(3), beta(3), gamma(1), delta(1), epsilon(1). F(0) has three main subunits: a(1), b(2) and c(10-14). The alpha and beta chains form an alternating ring which encloses part of the gamma chain. F(1) is attached to F(0) by a central stalk formed by the gamma and epsilon chains, while a peripheral stalk is formed by the delta and b chains.

Its subcellular location is the cell membrane. In terms of biological role, f(1)F(0) ATP synthase produces ATP from ADP in the presence of a proton or sodium gradient. F-type ATPases consist of two structural domains, F(1) containing the extramembraneous catalytic core and F(0) containing the membrane proton channel, linked together by a central stalk and a peripheral stalk. During catalysis, ATP synthesis in the catalytic domain of F(1) is coupled via a rotary mechanism of the central stalk subunits to proton translocation. Functionally, component of the F(0) channel, it forms part of the peripheral stalk, linking F(1) to F(0). The protein is ATP synthase subunit b of Alkaliphilus metalliredigens (strain QYMF).